The primary structure comprises 357 residues: Holliday junction branch migration complex subunit RuvB (357 aa).

The interval 4-195 is large ATPase domain (RuvB-L); the sequence is TDKLAAKAVS…FGIVARLEFY (192 aa). ATP-binding positions include Leu-34, Arg-35, Gly-76, Lys-79, Thr-80, Thr-81, 142–144, Arg-185, Tyr-195, and Arg-232; that span reads EDY. Thr-80 serves as a coordination point for Mg(2+). The interval 196–266 is small ATPAse domain (RuvB-S); the sequence is TPTELARIVT…VADAALAMLD (71 aa). The head domain (RuvB-H) stretch occupies residues 269–357; the sequence is AVGFDLMDRK…PARDLWDNNA (89 aa). The DNA site is built by Arg-305, Arg-324, and Arg-329.

The protein belongs to the RuvB family. As to quaternary structure, homohexamer. Forms an RuvA(8)-RuvB(12)-Holliday junction (HJ) complex. HJ DNA is sandwiched between 2 RuvA tetramers; dsDNA enters through RuvA and exits via RuvB. An RuvB hexamer assembles on each DNA strand where it exits the tetramer. Each RuvB hexamer is contacted by two RuvA subunits (via domain III) on 2 adjacent RuvB subunits; this complex drives branch migration. In the full resolvosome a probable DNA-RuvA(4)-RuvB(12)-RuvC(2) complex forms which resolves the HJ.

It is found in the cytoplasm. The enzyme catalyses ATP + H2O = ADP + phosphate + H(+). The RuvA-RuvB-RuvC complex processes Holliday junction (HJ) DNA during genetic recombination and DNA repair, while the RuvA-RuvB complex plays an important role in the rescue of blocked DNA replication forks via replication fork reversal (RFR). RuvA specifically binds to HJ cruciform DNA, conferring on it an open structure. The RuvB hexamer acts as an ATP-dependent pump, pulling dsDNA into and through the RuvAB complex. RuvB forms 2 homohexamers on either side of HJ DNA bound by 1 or 2 RuvA tetramers; 4 subunits per hexamer contact DNA at a time. Coordinated motions by a converter formed by DNA-disengaged RuvB subunits stimulates ATP hydrolysis and nucleotide exchange. Immobilization of the converter enables RuvB to convert the ATP-contained energy into a lever motion, pulling 2 nucleotides of DNA out of the RuvA tetramer per ATP hydrolyzed, thus driving DNA branch migration. The RuvB motors rotate together with the DNA substrate, which together with the progressing nucleotide cycle form the mechanistic basis for DNA recombination by continuous HJ branch migration. Branch migration allows RuvC to scan DNA until it finds its consensus sequence, where it cleaves and resolves cruciform DNA. The sequence is that of Holliday junction branch migration complex subunit RuvB from Ralstonia nicotianae (strain ATCC BAA-1114 / GMI1000) (Ralstonia solanacearum).